A 646-amino-acid polypeptide reads, in one-letter code: Macrolide export ATP-binding/permease protein MacB (646 aa).

Residues 7–245 (IRLEDICKTF…EATLQPHEEI (239 aa)) enclose the ABC transporter domain. 43 to 50 (GASGSGKS) is a binding site for ATP. 4 helical membrane-spanning segments follow: residues 274–294 (VLTLLGIIIGVSSVVTMLAIG), 528–548 (VAAISLLVGGIGVMNIMLVSV), 572–592 (FIIEALSVSAIGGAIGVILGL), and 609–629 (FGPVLLAFACAFATGLIFGFL).

It belongs to the ABC transporter superfamily. Macrolide exporter (TC 3.A.1.122) family. As to quaternary structure, homodimer.

Its subcellular location is the cell inner membrane. Its function is as follows. Non-canonical ABC transporter that contains transmembrane domains (TMD), which form a pore in the inner membrane, and an ATP-binding domain (NBD), which is responsible for energy generation. Confers resistance against macrolides. This chain is Macrolide export ATP-binding/permease protein MacB, found in Brucella abortus (strain 2308).